The sequence spans 134 residues: uncharacterized protein (134 aa).

This is an uncharacterized protein from Synechococcus elongatus (strain ATCC 33912 / PCC 7942 / FACHB-805) (Anacystis nidulans R2).